We begin with the raw amino-acid sequence, 497 residues long: Probable malate:quinone oxidoreductase (497 aa).

The protein belongs to the MQO family. FAD serves as cofactor.

It catalyses the reaction (S)-malate + a quinone = a quinol + oxaloacetate. It functions in the pathway carbohydrate metabolism; tricarboxylic acid cycle; oxaloacetate from (S)-malate (quinone route): step 1/1. In Prochlorococcus marinus subsp. pastoris (strain CCMP1986 / NIES-2087 / MED4), this protein is Probable malate:quinone oxidoreductase.